The following is a 463-amino-acid chain: Adenosylhomocysteinase (463 aa).

Substrate is bound by residues threonine 54, aspartate 128, and glutamate 189. 190–192 (TTT) serves as a coordination point for NAD(+). 2 residues coordinate substrate: lysine 219 and aspartate 223. NAD(+)-binding positions include asparagine 224, 253-258 (GYGDVG), glutamate 276, asparagine 311, 332-334 (IGH), and asparagine 377.

It belongs to the adenosylhomocysteinase family. Homotetramer. NAD(+) is required as a cofactor.

The protein resides in the cytoplasm. It carries out the reaction S-adenosyl-L-homocysteine + H2O = L-homocysteine + adenosine. The protein operates within amino-acid biosynthesis; L-homocysteine biosynthesis; L-homocysteine from S-adenosyl-L-homocysteine: step 1/1. In terms of biological role, may play a key role in the regulation of the intracellular concentration of adenosylhomocysteine. The polypeptide is Adenosylhomocysteinase (Rhodobacter capsulatus (strain ATCC BAA-309 / NBRC 16581 / SB1003)).